Here is a 221-residue protein sequence, read N- to C-terminus: Small ribosomal subunit protein uS5 (221 aa).

An S5 DRBM domain is found at 46-109 (IKDEVIDIKR…INAKLNIMEI (64 aa)).

It belongs to the universal ribosomal protein uS5 family. In terms of assembly, part of the 30S ribosomal subunit. Contacts protein S4.

With S4 and S12 plays an important role in translational accuracy. The protein is Small ribosomal subunit protein uS5 of Thermoplasma volcanium (strain ATCC 51530 / DSM 4299 / JCM 9571 / NBRC 15438 / GSS1).